We begin with the raw amino-acid sequence, 351 residues long: Prostaglandin reductase 2 (351 aa).

Residue 99-100 (FY) coordinates substrate. NADP(+) contacts are provided by residues 165–168 (GACG), Lys192, Tyr208, Asn231, 253–259 (CGQISQY), 287–289 (FTV), and Asn337. Substrate is bound at residue 288–290 (TVL).

This sequence belongs to the NADP-dependent oxidoreductase L4BD family. Monomer. As to expression, widely expressed with highest levels in adipose tissues.

The protein resides in the cytoplasm. It carries out the reaction 13,14-dihydro-15-oxo-prostaglandin E2 + NAD(+) = 15-oxoprostaglandin E2 + NADH + H(+). The catalysed reaction is 13,14-dihydro-15-oxo-prostaglandin E2 + NADP(+) = 15-oxoprostaglandin E2 + NADPH + H(+). The enzyme catalyses 13,14-dihydro-15-oxo-PGF2alpha + NADP(+) = 15-oxoprostaglandin F2alpha + NADPH + H(+). It catalyses the reaction 13,14-dihydro-15-oxo-prostaglandin E1 + NADP(+) = 15-oxoprostaglandin E1 + NADPH + H(+). It carries out the reaction 13,14-dihydro-15-oxo-prostaglandin F1alpha + NADP(+) = 15-oxoprostaglandin F1alpha + NADPH + H(+). Its function is as follows. Functions as 15-oxo-prostaglandin 13-reductase and acts on 15-keto-PGE1, 15-keto-PGE2, 15-keto-PGE1-alpha and 15-keto-PGE2-alpha with highest activity towards 15-keto-PGE2. Overexpression represses transcriptional activity of PPARG and inhibits adipocyte differentiation. This chain is Prostaglandin reductase 2, found in Mus musculus (Mouse).